The primary structure comprises 327 residues: Phosphate acyltransferase (327 aa).

Belongs to the PlsX family. As to quaternary structure, homodimer. Probably interacts with PlsY.

Its subcellular location is the cytoplasm. The catalysed reaction is a fatty acyl-[ACP] + phosphate = an acyl phosphate + holo-[ACP]. It functions in the pathway lipid metabolism; phospholipid metabolism. In terms of biological role, catalyzes the reversible formation of acyl-phosphate (acyl-PO(4)) from acyl-[acyl-carrier-protein] (acyl-ACP). This enzyme utilizes acyl-ACP as fatty acyl donor, but not acyl-CoA. This is Phosphate acyltransferase from Thermotoga neapolitana (strain ATCC 49049 / DSM 4359 / NBRC 107923 / NS-E).